Reading from the N-terminus, the 478-residue chain is Proline--tRNA ligase (478 aa).

The protein belongs to the class-II aminoacyl-tRNA synthetase family. ProS type 3 subfamily. In terms of assembly, homodimer.

The protein resides in the cytoplasm. The catalysed reaction is tRNA(Pro) + L-proline + ATP = L-prolyl-tRNA(Pro) + AMP + diphosphate. Catalyzes the attachment of proline to tRNA(Pro) in a two-step reaction: proline is first activated by ATP to form Pro-AMP and then transferred to the acceptor end of tRNA(Pro). The protein is Proline--tRNA ligase of Ignicoccus hospitalis (strain KIN4/I / DSM 18386 / JCM 14125).